The chain runs to 143 residues: MKVYLAAPMRGDRSALANVKKLLQALEERGYVVLTKHVADDVLDVEKGMTPREVFERDIRLLEEADVLVAEVSYPSLGVGFEIAYFLLRGKPVIALALRERLESVSAMIRGITWENFRLVAYSDVDEAIEKLDSMLPGSVDMQ.

Substrate is bound by residues histidine 37, glutamate 82, and serine 106–methionine 108.

It belongs to the 2'-deoxynucleoside 5'-phosphate N-hydrolase 1 family. Monomer and homodimer.

The catalysed reaction is a pyrimidine 2'-deoxyribonucleoside 5'-phosphate + H2O = a pyrimidine nucleobase + 2-deoxy-D-ribose 5-phosphate. It catalyses the reaction a purine 2'-deoxyribonucleoside 5'-phosphate + H2O = a purine nucleobase + 2-deoxy-D-ribose 5-phosphate. Functionally, catalyzes the cleavage of the N-glycosidic bond of deoxyribonucleoside 5'-monophosphates to yield deoxyribose 5-phosphate and a purine or pyrimidine base. This Thermofilum pendens (strain DSM 2475 / Hrk 5) protein is Putative 2'-deoxynucleoside 5'-phosphate N-hydrolase 1.